The primary structure comprises 286 residues: Apoptosis inhibitor 1 (286 aa).

BIR repeat units lie at residues Leu29–Ala96 and Leu131–Val199. The Zn(2+) site is built by Cys169, Cys172, His189, and Cys196. The RING-type zinc finger occupies Cys238–Arg274.

Acts by blocking cellular apoptosis early in infection. Later, stimulates caspase-3-like protease activity and induces apoptosis, probably to favor the release of occluded virions. This is Apoptosis inhibitor 1 (IAP1) from Lepidoptera (butterflies and moths).